The following is a 217-amino-acid chain: Large ribosomal subunit protein uL3 (217 aa).

The disordered stretch occupies residues Asp-134 to Thr-154. Position 153 is an N5-methylglutamine (Gln-153).

This sequence belongs to the universal ribosomal protein uL3 family. As to quaternary structure, part of the 50S ribosomal subunit. Forms a cluster with proteins L14 and L19. Methylated by PrmB.

Functionally, one of the primary rRNA binding proteins, it binds directly near the 3'-end of the 23S rRNA, where it nucleates assembly of the 50S subunit. The sequence is that of Large ribosomal subunit protein uL3 from Coxiella burnetii (strain Dugway 5J108-111).